The sequence spans 472 residues: Coronin-6 (472 aa).

WD repeat units lie at residues 79–119, 129–169, 173–212, 216–259, and 264–304; these read GHTG…PVRN, GHSK…VLLS, IHPDVIHSVCWNSNGSLLATTCKDKTLRIIDPRKSQVVAE, AHEG…EPVA, and DTSN…PFVH. A disordered region spans residues 409–434; sequence NILDVRPPASPRRSQSASEAPLSQQH. Residues 419–429 show a composition bias toward low complexity; that stretch reads PRRSQSASEAP. The stretch at 430–469 forms a coiled coil; the sequence is LSQQHTLETLLEEMKALRERVQAQEERITALENMLCELVD.

This Rattus norvegicus (Rat) protein is Coronin-6 (Coro6).